Here is a 194-residue protein sequence, read N- to C-terminus: uncharacterized protein (194 aa).

Disordered regions lie at residues 1–21 (MPKG…APPL) and 73–97 (PATV…PWPS). Residues 73 to 96 (PATVPPPPPGLGPPSERPCPPPWP) are compositionally biased toward pro residues.

This is an uncharacterized protein from Mus musculus (Mouse).